Consider the following 647-residue polypeptide: MEVKGKKKITGKSPQTSQGKNKFHKNSESSSAKAFPRKAAKEGGPKVTSKNFEKGATKPGKKRVKQFKNKPQGGKGPKDKFQKANKFNKKRKFQPDGKSDESAAKKPKWDDFKKKKKELKQNRQLSDKTNYDVVVRAKHIWESLRRKDCDKEKRVKLMSDLQKLIQGKIKTIAFAHDSTRVIQCLIQYGSEEQRKWAFEELQGDLVELSKAKYSRNIVKKFLMYGSKPQIAEIIRSFKGHVRKMLRHSEASAIVEYAYNDKAILEQRNMLTEELYGNTFQLYKSADHPTLEKVLEVQPGKLELILDEMKQILTPMAQKEAVIKHSLVHKVFLDFFTYAPPKLRSELIEAIREAVVYLAHTHDGARVAMHCLWHGTPKDRKVIVKTMKTYVEKIANGQYSHLVLLAAFDCIDDTKLVKQIIISEVISSLPSIVNDKYGRKVLLYLLSPRAPAHLVPEIIQLLQKGDGNAHSKKDTAIRRRELLESISPALLSYLQGHTREVVLDKSVCVLVSDILGSATGDAQPAMDAIAGLAAEELYPGGKDGELHIAEHPAGHLVLKWLIEQDKKIKENGKEGCFAKTLVECVGMKNLKSWASINRGAIVLSSLLQSCDQDVVNKVKAGLKTLIPTLEKTKSTSKGIQTLLEKLTA.

Residues 1–10 (MEVKGKKKIT) are compositionally biased toward basic residues. The disordered stretch occupies residues 1–123 (MEVKGKKKIT…KKKKELKQNR (123 aa)). At lysine 33 the chain carries N6-acetyllysine. Positions 59 to 68 (PGKKRVKQFK) are enriched in basic residues. Residues 93–123 (FQPDGKSDESAAKKPKWDDFKKKKKELKQNR) are compositionally biased toward basic and acidic residues. The Nuclear localization signal signature appears at 105 to 117 (KKPKWDDFKKKKK). The PUM-HD domain occupies 142–509 (ESLRRKDCDK…VVLDKSVCVL (368 aa)). Pumilio repeat units lie at residues 176–211 (HDSTRVIQCLIQYGSEEQRKWAFEELQGDLVELSKA), 212–247 (KYSRNIVKKFLMYGSKPQIAEIIRSFKGHVRKMLRH), 248–276 (SEASAIVEYAYNDKAILEQRNMLTEELYG), 288–324 (PTLEKVLEVQPGKLELILDEMKQILTPMAQKEAVIKH), 325–360 (SLVHKVFLDFFTYAPPKLRSELIEAIREAVVYLAHT), 361–396 (HDGARVAMHCLWHGTPKDRKVIVKTMKTYVEKIANG), 397–434 (QYSHLVLLAAFDCIDDTKLVKQIIISEVISSLPSIVND), 435–503 (KYGR…VVLD), 504–550 (KSVC…IAEH), 551–595 (PAGH…WASI), and 596–635 (NRGAIVLSSLLQSCDQDVVNKVKAGLKTLIPTLEKTKSTS).

In terms of assembly, interacts with PARP1 (via catalytic domain).

It is found in the nucleus. Its subcellular location is the nucleolus. It localises to the nucleoplasm. The protein localises to the chromosome. Inhibits the poly(ADP-ribosyl)ation activity of PARP1 and the degradation of PARP1 by CASP3 following genotoxic stress. Binds to double-stranded RNA or DNA without sequence specificity. Involved in development of the eye and of primordial germ cells. The chain is Pumilio homolog 3 from Rattus norvegicus (Rat).